A 156-amino-acid polypeptide reads, in one-letter code: Aspartate carbamoyltransferase regulatory chain (156 aa).

Zn(2+)-binding residues include Cys109, Cys114, Cys140, and Cys143.

It belongs to the PyrI family. Contains catalytic and regulatory chains. The cofactor is Zn(2+).

In terms of biological role, involved in allosteric regulation of aspartate carbamoyltransferase. The chain is Aspartate carbamoyltransferase regulatory chain from Methanosarcina acetivorans (strain ATCC 35395 / DSM 2834 / JCM 12185 / C2A).